A 398-amino-acid chain; its full sequence is 1-deoxy-D-xylulose 5-phosphate reductoisomerase (398 aa).

Threonine 11, glycine 12, serine 13, isoleucine 14, and asparagine 125 together coordinate NADPH. Lysine 126 is a 1-deoxy-D-xylulose 5-phosphate binding site. Glutamate 127 is an NADPH binding site. Aspartate 151 contacts Mn(2+). 1-deoxy-D-xylulose 5-phosphate is bound by residues serine 152, glutamate 153, serine 186, and histidine 209. Glutamate 153 contributes to the Mn(2+) binding site. Glycine 215 serves as a coordination point for NADPH. 1-deoxy-D-xylulose 5-phosphate is bound by residues serine 222, asparagine 227, lysine 228, and glutamate 231. Glutamate 231 serves as a coordination point for Mn(2+).

This sequence belongs to the DXR family. The cofactor is Mg(2+). It depends on Mn(2+) as a cofactor.

The enzyme catalyses 2-C-methyl-D-erythritol 4-phosphate + NADP(+) = 1-deoxy-D-xylulose 5-phosphate + NADPH + H(+). It functions in the pathway isoprenoid biosynthesis; isopentenyl diphosphate biosynthesis via DXP pathway; isopentenyl diphosphate from 1-deoxy-D-xylulose 5-phosphate: step 1/6. In terms of biological role, catalyzes the NADPH-dependent rearrangement and reduction of 1-deoxy-D-xylulose-5-phosphate (DXP) to 2-C-methyl-D-erythritol 4-phosphate (MEP). The chain is 1-deoxy-D-xylulose 5-phosphate reductoisomerase from Acinetobacter baumannii (strain AB307-0294).